A 704-amino-acid polypeptide reads, in one-letter code: Acetyl-coenzyme A synthetase 1 (704 aa).

Residues 239-242 and Thr358 contribute to the CoA site; that span reads RGGK. Residues 434-436, 458-463, Asp550, and Arg565 each bind ATP; these read GEP and DTYWQT. Ser573 lines the CoA pocket. An ATP-binding site is contributed by Arg576. Arg641 is a binding site for CoA. Residues 702–704 carry the Microbody targeting signal motif; it reads VKL.

Belongs to the ATP-dependent AMP-binding enzyme family.

It localises to the microsome. It is found in the endoplasmic reticulum. It catalyses the reaction acetate + ATP + CoA = acetyl-CoA + AMP + diphosphate. The polypeptide is Acetyl-coenzyme A synthetase 1 (ACS1) (Candida glabrata (strain ATCC 2001 / BCRC 20586 / JCM 3761 / NBRC 0622 / NRRL Y-65 / CBS 138) (Yeast)).